Consider the following 221-residue polypeptide: Lactate racemization regulatory protein (221 aa).

Residues 139–213 (NGKKGAICAF…NHKFIIQDVS (75 aa)) form the HTH crp-type domain. A DNA-binding region (H-T-H motif) is located at residues 172-192 (NDDIAGFCGISSRSSVNRMLK).

In terms of assembly, multimerizes on DNA. Multimerization is required for transcription activation.

Its activity is regulated as follows. L-lactate acts as a positive effector on the binding and multimerization of LarR on DNA, while D-lactate antagonizes the positive effect of L-lactate. Functionally, positive transcriptional regulator that is absolutely required for the expression of lactate racemase (Lar) activity. Controls Lar expression by sensing the L-/D-lactate ration. Binds to a 16-bp palindromic sequence (Lar box motif) that is present in the larR-larA intergenic region, allowing transcription of the larABCDE operon. This chain is Lactate racemization regulatory protein, found in Lactiplantibacillus plantarum (strain ATCC BAA-793 / NCIMB 8826 / WCFS1) (Lactobacillus plantarum).